The sequence spans 457 residues: Protein translocase subunit SecY (457 aa).

10 helical membrane-spanning segments follow: residues 17–37 (IFFT…PVPG), 75–95 (IALG…LVVF), 118–138 (TRLF…KFAL), 162–182 (WVFY…LMWV), 195–215 (ISLI…GSIF), 230–250 (IVSL…TVLI), 287–307 (VIPV…GQFL), 326–346 (VAYS…WTAT), 386–406 (LLGA…GRIL), and 412–432 (VSYF…LDTM).

This sequence belongs to the SecY/SEC61-alpha family. In terms of assembly, component of the Sec protein translocase complex. Heterotrimer consisting of SecY, SecE and SecG subunits. The heterotrimers can form oligomers, although 1 heterotrimer is thought to be able to translocate proteins. Interacts with the ribosome. Interacts with SecDF, and other proteins may be involved. Interacts with SecA.

It localises to the cell inner membrane. Functionally, the central subunit of the protein translocation channel SecYEG. Consists of two halves formed by TMs 1-5 and 6-10. These two domains form a lateral gate at the front which open onto the bilayer between TMs 2 and 7, and are clamped together by SecE at the back. The channel is closed by both a pore ring composed of hydrophobic SecY resides and a short helix (helix 2A) on the extracellular side of the membrane which forms a plug. The plug probably moves laterally to allow the channel to open. The ring and the pore may move independently. This Chlamydia trachomatis serovar D (strain ATCC VR-885 / DSM 19411 / UW-3/Cx) protein is Protein translocase subunit SecY.